Here is a 391-residue protein sequence, read N- to C-terminus: Pectin acetylesterase 7 (391 aa).

The first 23 residues, 1–23, serve as a signal peptide directing secretion; that stretch reads MGRLKQCWSSLLVLAVLVIGTGA. Residues Ser-171, Asp-267, and His-334 each act as charge relay system in the active site.

This sequence belongs to the pectinacetylesterase family.

It localises to the secreted. It is found in the cell wall. Hydrolyzes acetyl esters in homogalacturonan regions of pectin. In type I primary cell wall, galacturonic acid residues of pectin can be acetylated at the O-2 and O-3 positions. Decreasing the degree of acetylation of pectin gels in vitro alters their physical properties. The chain is Pectin acetylesterase 7 from Arabidopsis thaliana (Mouse-ear cress).